We begin with the raw amino-acid sequence, 216 residues long: uncharacterized protein (216 aa).

It localises to the plastid. The protein localises to the chloroplast. This is an uncharacterized protein from Pyropia yezoensis (Susabi-nori).